A 782-amino-acid chain; its full sequence is Hypersensitive to pore-forming toxin protein 40 (782 aa).

Positions 138–203 (ESEIVPGAMY…TLFVSDQFSI (66 aa)) constitute a Tudor; degenerate domain. Polar residues-rich tracts occupy residues 332–346 (SVNP…SSSM) and 413–443 (FEST…STIQ). 4 disordered regions span residues 332 to 351 (SVNP…DCPY), 413 to 448 (FEST…NEED), 472 to 492 (IERP…NMSE), and 617 to 672 (VAQG…LEDP). Positions 617–634 (VAQGSNAPKTAPNDSVNS) are enriched in polar residues. Residues 638–662 (DDIHETDKRGNHCKSVTEDPKDNKD) show a composition bias toward basic and acidic residues.

The protein resides in the cytoplasm. Its subcellular location is the perinuclear region. The sequence is that of Hypersensitive to pore-forming toxin protein 40 from Caenorhabditis elegans.